The primary structure comprises 2617 residues: Ubiquitin carboxyl-terminal hydrolase 24 (2617 aa).

Residues 3–44 (SEEEQHMTTLLCMGFSDPATIRKALRLAKNDINEAVALLTNE) enclose the UBA domain. Residues 45–99 (RPGLDYGGYEPMDSGGPSPGPGGGPRGDSGSDGSGPSRGGSTGGGGGFDPPPAYH) are disordered. Residues Ser-62 and Ser-85 each carry the phosphoserine modification. Gly residues predominate over residues 65–92 (PGGGPRGDSGSDGSGPSRGGSTGGGGGF). Phosphotyrosine is present on Tyr-939. Disordered regions lie at residues 1030 to 1056 (KTSG…SGAF) and 1127 to 1148 (LLSE…QQHQ). Low complexity-rich tracts occupy residues 1031 to 1056 (TSGS…SGAF) and 1128 to 1148 (LSET…QQHQ). 2 positions are modified to phosphoserine: Ser-1138 and Ser-1282. Positions 1686–2039 (VGLRNGGATC…NAYMLFYQRV (354 aa)) constitute a USP domain. The Nucleophile role is filled by Cys-1695. The tract at residues 1920-1942 (QDSSSEVGENGRNMDQGGGGSPR) is disordered. Position 1940 is a phosphoserine (Ser-1940). Residue His-1967 is the Proton acceptor of the active site. Residues Ser-2044, Ser-2074, and Ser-2558 each carry the phosphoserine modification. Positions 2060–2087 (AEDLSLSAPSSPEISPQSSPRPHRPNND) are disordered. Low complexity predominate over residues 2066 to 2079 (SAPSSPEISPQSSP). Thr-2562 bears the Phosphothreonine mark. Residues 2572 to 2617 (EKEQSGSSNGSESSPANENGERHLQQGSESPMMIGELRSDLDDVDP) are disordered. A compositionally biased stretch (low complexity) spans 2576–2589 (SGSSNGSESSPANE). Ser-2601 carries the phosphoserine modification. The segment covering 2608 to 2617 (LRSDLDDVDP) has biased composition (basic and acidic residues).

Belongs to the peptidase C19 family.

It catalyses the reaction Thiol-dependent hydrolysis of ester, thioester, amide, peptide and isopeptide bonds formed by the C-terminal Gly of ubiquitin (a 76-residue protein attached to proteins as an intracellular targeting signal).. Protease that can remove conjugated ubiquitin from target proteins and polyubiquitin chains. Deubiquitinates DDB2, preventing its proteasomal degradation. This Mus musculus (Mouse) protein is Ubiquitin carboxyl-terminal hydrolase 24 (Usp24).